The following is a 134-amino-acid chain: Small ribosomal subunit protein bS16 (134 aa).

The interval 80-134 (GLAKRPTRSNPTKGEPGKKAQERLAMAKQAEEEAAAKAAEAAAAAAAPAEEAASE) is disordered. The segment covering 115–134 (AKAAEAAAAAAAPAEEAASE) has biased composition (low complexity).

Belongs to the bacterial ribosomal protein bS16 family.

The protein is Small ribosomal subunit protein bS16 of Brucella anthropi (strain ATCC 49188 / DSM 6882 / CCUG 24695 / JCM 21032 / LMG 3331 / NBRC 15819 / NCTC 12168 / Alc 37) (Ochrobactrum anthropi).